The sequence spans 1167 residues: Pesticidal crystal protein Cry21Aa (1167 aa).

It belongs to the delta endotoxin family.

In terms of biological role, endotoxin with nematicidal activity. The chain is Pesticidal crystal protein Cry21Aa (cry21Aa) from Bacillus thuringiensis.